Consider the following 248-residue polypeptide: NADH dehydrogenase [ubiquinone] flavoprotein 2, mitochondrial (248 aa).

The N-terminal 31 residues, 1-31 (MFSLALRARASGLTAQWGRHARNLHKTAVQN), are a transit peptide targeting the mitochondrion. Cysteine 134, cysteine 139, cysteine 175, and cysteine 179 together coordinate [2Fe-2S] cluster. Tyrosine 192 is subject to Phosphotyrosine; by SRC. Residues 229–248 (GLTSLTEPPKGPGFGVQAGL) are disordered.

Belongs to the complex I 24 kDa subunit family. In terms of assembly, core subunit of respiratory chain NADH dehydrogenase (Complex I) which is composed of 45 different subunits. This is a component of the flavoprotein-sulfur (FP) fragment of the enzyme. [2Fe-2S] cluster is required as a cofactor.

The protein resides in the mitochondrion inner membrane. It carries out the reaction a ubiquinone + NADH + 5 H(+)(in) = a ubiquinol + NAD(+) + 4 H(+)(out). In terms of biological role, core subunit of the mitochondrial membrane respiratory chain NADH dehydrogenase (Complex I) which catalyzes electron transfer from NADH through the respiratory chain, using ubiquinone as an electron acceptor. Parts of the peripheral arm of the enzyme, where the electrons from NADH are accepted by flavin mononucleotide (FMN) and then passed along a chain of iron-sulfur clusters by electron tunnelling to the final acceptor ubiquinone. Contains one iron-sulfur cluster. This Rattus norvegicus (Rat) protein is NADH dehydrogenase [ubiquinone] flavoprotein 2, mitochondrial.